We begin with the raw amino-acid sequence, 416 residues long: tRNA(Met) cytidine acetate ligase (416 aa).

Residues 7 to 20 (VVEY…HLHH), glycine 101, asparagine 162, and 187 to 188 (RI) each bind ATP.

It belongs to the TmcAL family.

It is found in the cytoplasm. The enzyme catalyses cytidine(34) in elongator tRNA(Met) + acetate + ATP = N(4)-acetylcytidine(34) in elongator tRNA(Met) + AMP + diphosphate. Its function is as follows. Catalyzes the formation of N(4)-acetylcytidine (ac(4)C) at the wobble position of elongator tRNA(Met), using acetate and ATP as substrates. First activates an acetate ion to form acetyladenylate (Ac-AMP) and then transfers the acetyl group to tRNA to form ac(4)C34. This Halalkalibacterium halodurans (strain ATCC BAA-125 / DSM 18197 / FERM 7344 / JCM 9153 / C-125) (Bacillus halodurans) protein is tRNA(Met) cytidine acetate ligase.